The sequence spans 282 residues: Bis(5'-nucleosyl)-tetraphosphatase, symmetrical (282 aa).

Belongs to the Ap4A hydrolase family.

The enzyme catalyses P(1),P(4)-bis(5'-adenosyl) tetraphosphate + H2O = 2 ADP + 2 H(+). In terms of biological role, hydrolyzes diadenosine 5',5'''-P1,P4-tetraphosphate to yield ADP. This is Bis(5'-nucleosyl)-tetraphosphatase, symmetrical from Escherichia coli O45:K1 (strain S88 / ExPEC).